We begin with the raw amino-acid sequence, 344 residues long: tRNA N6-adenosine threonylcarbamoyltransferase (344 aa).

The Fe cation site is built by histidine 119 and histidine 123. Substrate is bound by residues 141–145 (VVSGG), aspartate 174, glycine 187, aspartate 191, and asparagine 280. Aspartate 310 serves as a coordination point for Fe cation.

It belongs to the KAE1 / TsaD family. Fe(2+) is required as a cofactor.

Its subcellular location is the cytoplasm. It carries out the reaction L-threonylcarbamoyladenylate + adenosine(37) in tRNA = N(6)-L-threonylcarbamoyladenosine(37) in tRNA + AMP + H(+). Functionally, required for the formation of a threonylcarbamoyl group on adenosine at position 37 (t(6)A37) in tRNAs that read codons beginning with adenine. Is involved in the transfer of the threonylcarbamoyl moiety of threonylcarbamoyl-AMP (TC-AMP) to the N6 group of A37, together with TsaE and TsaB. TsaD likely plays a direct catalytic role in this reaction. In Listeria welshimeri serovar 6b (strain ATCC 35897 / DSM 20650 / CCUG 15529 / CIP 8149 / NCTC 11857 / SLCC 5334 / V8), this protein is tRNA N6-adenosine threonylcarbamoyltransferase.